A 1931-amino-acid chain; its full sequence is Chitin synthase 5 (1931 aa).

One can recognise a Myosin motor domain in the interval 11 to 777 (LGVTDLSSLA…LFRFLEDRLR (767 aa)). 122–129 (GPTGSGKS) is a binding site for ATP. 3 N-linked (GlcNAc...) asparagine glycosylation sites follow: Asn510, Asn538, and Asn676. Positions 655-677 (VDSLLKSFDQTQTWYIFALRPND) are actin-binding. The tract at residues 798–817 (DPFSPHRYQPTSFDSQDHVY) is disordered. N-linked (GlcNAc...) asparagine glycosylation is present at Asn842. Helical transmembrane passes span 912–932 (WVWLCSILTWWIPGFLLSKIA) and 951–971 (MIIWFICGCAIFVIAILGPVI). Asn1062, Asn1078, and Asn1146 each carry an N-linked (GlcNAc...) asparagine glycan. A helical membrane pass occupies residues 1220-1240 (ILLALSCVMVAVIGFKFLSAL). N-linked (GlcNAc...) asparagine glycosylation is present at Asn1583. The next 3 membrane-spanning stretches (helical) occupy residues 1615-1635 (LSTIIAPVTVAYIVYLIYLIV), 1641-1661 (IPTLSIIMLAAIYGLQAMIFI), and 1668-1688 (MIAWMIFYICAIPVFSFLLPL). The segment at 1826–1847 (AHRPSLDDTSSFHQPYQPAPRP) is disordered. Residues 1875–1930 (AITDSQLERSIRKICANAELDKLTKKGVRKELEREYGVELTERREAINRLVEKVLT) enclose the DEK-C domain.

This sequence in the N-terminal section; belongs to the TRAFAC class CC myosin-kinesin ATPase superfamily. Myosin family. It in the C-terminal section; belongs to the chitin synthase family. Class V subfamily.

Its subcellular location is the cell membrane. It localises to the cell septum. The protein localises to the cell tip. The catalysed reaction is [(1-&gt;4)-N-acetyl-beta-D-glucosaminyl](n) + UDP-N-acetyl-alpha-D-glucosamine = [(1-&gt;4)-N-acetyl-beta-D-glucosaminyl](n+1) + UDP + H(+). In terms of biological role, polymerizes chitin, a structural polymer of the cell wall and septum, by transferring the sugar moiety of UDP-GlcNAc to the non-reducing end of the growing chitin polymer. Produces a large proportion of the chitin that is not deacetylated to chitosan. This Cryptococcus neoformans var. grubii serotype A (strain H99 / ATCC 208821 / CBS 10515 / FGSC 9487) (Filobasidiella neoformans var. grubii) protein is Chitin synthase 5.